Reading from the N-terminus, the 651-residue chain is Threonine--tRNA ligase (651 aa).

Residues 1-61 (MPTIQLPDGS…DKDVSLRIIT (61 aa)) enclose the TGS domain. The tract at residues 242 to 533 (DHRLLAKKMD…LLEESAGKLP (292 aa)) is catalytic. Cys333, His384, and His510 together coordinate Zn(2+). A disordered region spans residues 631-651 (ISQRSRKSPAPSPLFPVGGES).

Belongs to the class-II aminoacyl-tRNA synthetase family. As to quaternary structure, homodimer. It depends on Zn(2+) as a cofactor.

The protein localises to the cytoplasm. It carries out the reaction tRNA(Thr) + L-threonine + ATP = L-threonyl-tRNA(Thr) + AMP + diphosphate + H(+). Catalyzes the attachment of threonine to tRNA(Thr) in a two-step reaction: L-threonine is first activated by ATP to form Thr-AMP and then transferred to the acceptor end of tRNA(Thr). Also edits incorrectly charged L-seryl-tRNA(Thr). The chain is Threonine--tRNA ligase from Coxiella burnetii (strain RSA 493 / Nine Mile phase I).